A 422-amino-acid chain; its full sequence is Probable alpha-1,6-mannosyltransferase MNN11 (422 aa).

Residues 1–31 (MAIKPRTKGKTYSSRSVGSQWFNRLGFKQNK) lie on the Cytoplasmic side of the membrane. Residues 32–52 (YGTCKFLSIITAFVFILYFFS) traverse the membrane as a helical; Signal-anchor for type II membrane protein segment. Residues 53 to 422 (NRFYPISRSA…GHMYQKIKKS (370 aa)) lie on the Lumenal side of the membrane.

The protein belongs to the glycosyltransferase 34 family. Component of the M-Pol II complex composed of ANP1, MNN9, MNN10, MNN11 and HOC1.

It is found in the golgi apparatus. It localises to the cis-Golgi network membrane. In terms of biological role, required for synthesis of full-length mannan chains. Its function is as follows. The M-Pol II complex possesses alpha-1,6-mannosyltransferase activity and is probably involved in the elongation of the mannan backbone of N-linked glycans on cell wall and periplasmic proteins. This chain is Probable alpha-1,6-mannosyltransferase MNN11 (MNN11), found in Saccharomyces cerevisiae (strain ATCC 204508 / S288c) (Baker's yeast).